The following is a 250-amino-acid chain: mRNA-decapping protein g5R (250 aa).

Positions 97 to 243 constitute a Nudix hydrolase domain; the sequence is QKFRKNWLLP…IIGPAFNFIK (147 aa). The Nudix box signature appears at 132–153; the sequence is GKPKEDESDLTCAIREFEEETG. E138 provides a ligand contact to Mg(2+). The active-site Nucleophile is E147. Mg(2+) is bound by residues E151 and D173.

This sequence belongs to the Nudix hydrolase family. DIPP subfamily. As to quaternary structure, interacts with host RPL23A. Requires Mg(2+) as cofactor. Mn(2+) serves as cofactor.

It localises to the host rough endoplasmic reticulum. The enzyme catalyses diphospho-myo-inositol polyphosphate + H2O = myo-inositol polyphosphate + phosphate.. Decapping enzyme required for the removal of the 5'-end m7GpppN cap tethered to viral and host mRNAs to allow their decay in cells. May therefore accelerate viral and cellular mRNA turnover to eliminate competing host mRNAs and allow stage-specific synthesis of viral proteins. Acceleration of the turnover of cellular transcripts may even promote the shutoff of host protein synthesis. In addition to the mRNA cap, g5R also efficiently hydrolyzes diphosphoinositol polyphosphates. Down-regulation of the level of PP-InsP5 (diphosphoinositol pentakisphosphate) may play a role in viral manipulation of the cellular secretory pathway, a step necessary for the formation of virions. Binds viral and cellular poly(A) mRNAs, thereby decreasing both types of mRNAs. The chain is mRNA-decapping protein g5R from African swine fever virus (isolate Tick/South Africa/Pretoriuskop Pr4/1996) (ASFV).